Consider the following 326-residue polypeptide: uncharacterized protein (326 aa).

The S4 RNA-binding domain maps to 15–76; it reads VRIEKFCLKL…IEPYLHNHSE (62 aa). Asp-147 is an active-site residue.

This sequence belongs to the pseudouridine synthase RluA family.

It catalyses the reaction a uridine in RNA = a pseudouridine in RNA. This is an uncharacterized protein from Mycoplasma pneumoniae (strain ATCC 29342 / M129 / Subtype 1) (Mycoplasmoides pneumoniae).